Reading from the N-terminus, the 763-residue chain is Nibrin (763 aa).

One can recognise an FHA domain in the interval 22-81; sequence YVVGRKNCAILIPEDQSISRCHATLSVSHPSANLGQTNAASVLSIKDSSKYGTTVNGDKM. BRCT domains follow at residues 102-179 and 215-324; these read SKYR…CELL and KRKS…NPRR. Disordered regions lie at residues 389 to 496, 535 to 593, and 738 to 763; these read VKET…SSQT, SKAA…SEIE, and QTQQVREESLAEDLFRYNPKPSKRRR. The span at 423–433 shows a compositional bias: basic and acidic residues; sequence LFREDETDTRK. Residues 434-443 are compositionally biased toward polar residues; the sequence is NTPSLLPTKS. Positions 469-474 match the Nuclear localization signal motif; sequence AKKRDR. Basic and acidic residues predominate over residues 473-482; the sequence is DRAEDEKEAS. A compositionally biased stretch (basic and acidic residues) spans 742–752; the sequence is VREESLAEDLF. The FxF/Y motif motif lies at 748 to 757; the sequence is AEDLFRYNPK.

This sequence belongs to the Nibrin family. In terms of assembly, component of the MRN complex composed of two heterodimers rad50 and mre11 associated with a single nbn.

The protein localises to the nucleus. It is found in the chromosome. It localises to the PML body. Its subcellular location is the telomere. Its function is as follows. Component of the MRN complex, which plays a central role in double-strand break (DSB) repair, DNA recombination, maintenance of telomere integrity and meiosis. The MRN complex is involved in the repair of DNA double-strand breaks (DSBs) via homologous recombination (HR), an error-free mechanism which primarily occurs during S and G2 phases. The complex (1) mediates the end resection of damaged DNA, which generates proper single-stranded DNA, a key initial steps in HR, and is (2) required for the recruitment of other repair factors and efficient activation of ATM and ATR upon DNA damage. The MRN complex possesses single-strand endonuclease activity and double-strand-specific 3'-5' exonuclease activity, which are provided by MRE11, to initiate end resection, which is required for single-strand invasion and recombination. Within the MRN complex, nbn acts as a protein-protein adapter, which specifically recognizes and binds phosphorylated proteins, promoting their recruitment to DNA damage sites. Recruits mre11 and rad50 components of the MRN complex to DSBs in response to DNA damage. Promotes the recruitment of PI3/PI4-kinase family members atm, atr, and probably DNA-PKcs to the DNA damage sites, activating their functions. Mediates the recruitment of phosphorylated rbbp8/CtIP to DSBs, leading to cooperation between the MRN complex and rbbp8/CtIP to initiate end resection. The MRN complex promotes recruitment of topbp1 to DNA damage sites. The MRN complex and rbbp8/CtIP are also required for chromosome alignment during metaphase. The sequence is that of Nibrin from Xenopus laevis (African clawed frog).